The sequence spans 304 residues: Olfactory receptor 4K13 (304 aa).

Over 1-25 the chain is Extracellular; the sequence is MERANHSVVSEFILLGLSKSQNLQI. A glycan (N-linked (GlcNAc...) asparagine) is linked at asparagine 5. A helical transmembrane segment spans residues 26–49; the sequence is LFFLGFSVVFVGIVLGNLLILVTV. The Cytoplasmic segment spans residues 50–57; sequence TFDSLLHT. The chain crosses the membrane as a helical span at residues 58-79; it reads PMYFLLSNLSCIDMILASFATP. Residues 80–100 lie on the Extracellular side of the membrane; the sequence is KMIVDFLRERKTISWWGCYSQ. Cysteine 97 and cysteine 189 form a disulfide bridge. Residues 101 to 120 form a helical membrane-spanning segment; sequence MFFMHLLGGSEMMLLVAMAI. Over 121–139 the chain is Cytoplasmic; the sequence is DRYVAICKPLHYMTIMSPR. The chain crosses the membrane as a helical span at residues 140–158; the sequence is VLTGLLLSSYAVGFVHSSS. The Extracellular segment spans residues 159-195; that stretch reads QMAFMLTLPFCGPNVIDSFFCDLPLVIKLACKDTYIL. The helical transmembrane segment at 196-219 threads the bilayer; the sequence is QLLVIADSGLLSLVCFLLLLVSYG. The Cytoplasmic segment spans residues 220–235; the sequence is VIIFSVRYRAASRSSK. Residues 236-258 form a helical membrane-spanning segment; sequence AFSTLSAHITVVTLFFAPCVFIY. At 259 to 269 the chain is on the extracellular side; that stretch reads VWPFSRYSVDK. Residues 270 to 289 form a helical membrane-spanning segment; it reads ILSVFYTIFTPLLNPIIYTL. Residues 290–304 are Cytoplasmic-facing; it reads RNQEVKAAIKKRLCI.

It belongs to the G-protein coupled receptor 1 family.

Its subcellular location is the cell membrane. Its function is as follows. Odorant receptor. The protein is Olfactory receptor 4K13 (OR4K13) of Homo sapiens (Human).